The following is a 437-amino-acid chain: Aromatic peroxidase fscJ (437 aa).

The first 19 residues, 1 to 19, serve as a signal peptide directing secretion; it reads MKWLHLLSVVACVADEVYA. Cys83 contacts heme.

Belongs to the chloroperoxidase family. The cofactor is heme b.

Its pathway is secondary metabolite biosynthesis. Aromatic peroxidase; part of the fragmented gene cluster that mediates the biosynthesis of fusarochromene, a tryptophan-derived metabolite closely related to a group of mycotoxins including fusarochromanone. The role of fscJ within the pathway has not been identified yet. The first step of the pathway is the epimerization of L-tryptophan to D-tryptophan in the presence of the NRPS-like tryptophan epimerase fscC. D-tryptophan is subsequently hydroxylated by the tryptophan 6-hydroxylase fscE to yield 6-hydroxytryptophan. The pyrrole ring undergoes cleavaged by the tryptophan 2,3-dioxygenase fscD and is finally converted to 4-hydroxykyrunenine by the hydrolase fscH. The NRPS-like oxidoreductase fscA reduces the carboxyl group to primary alcohol and the DMATS-type prenyltransferase fscG performs prenylation, followed by the formation of a chromene ring catalyzed by the oxidoreductase fscI, which leads to desacetylfusarochromene. Epoxidation by fscF and rearrangement reactions of chromene double bonds convert compound desacetylfusarochromene to fusarochromanones. Although specific acetyltransferases were not found near the fsc gene cluster, several predicted enzymes containing the N-acetyltransferase superfamily domain are present in the genome of F.equiseti. These predicted enzymes may have the potential to convert desacetylfusarochromene to fusarochromene. The protein is Aromatic peroxidase fscJ of Fusarium equiseti (Fusarium scirpi).